The following is a 78-amino-acid chain: Protein SlyX homolog (78 aa).

It belongs to the SlyX family.

In Photobacterium profundum (strain SS9), this protein is Protein SlyX homolog.